A 218-amino-acid chain; its full sequence is Protein P9 (218 aa).

The protein resides in the virion membrane. In Pseudoalteromonas espejiana (Bacteriophage PM2), this protein is Protein P9 (IX).